A 284-amino-acid chain; its full sequence is D-tagatose-1,6-bisphosphate aldolase subunit GatY (284 aa).

Residue Asp82 is the Proton donor of the active site. The Zn(2+) site is built by His83 and His180. Gly181 is a binding site for dihydroxyacetone phosphate. His208 is a binding site for Zn(2+). Residues 209–211 (GAS) and 230–233 (NVAT) each bind dihydroxyacetone phosphate.

The protein belongs to the class II fructose-bisphosphate aldolase family. TagBP aldolase GatY subfamily. Forms a complex with GatZ. It depends on Zn(2+) as a cofactor.

It carries out the reaction D-tagatofuranose 1,6-bisphosphate = D-glyceraldehyde 3-phosphate + dihydroxyacetone phosphate. It functions in the pathway carbohydrate metabolism; D-tagatose 6-phosphate degradation; D-glyceraldehyde 3-phosphate and glycerone phosphate from D-tagatose 6-phosphate: step 2/2. Functionally, catalytic subunit of the tagatose-1,6-bisphosphate aldolase GatYZ, which catalyzes the reversible aldol condensation of dihydroxyacetone phosphate (DHAP or glycerone-phosphate) with glyceraldehyde 3-phosphate (G3P) to produce tagatose 1,6-bisphosphate (TBP). Requires GatZ subunit for full activity and stability. Is involved in the catabolism of galactitol. In Escherichia coli O17:K52:H18 (strain UMN026 / ExPEC), this protein is D-tagatose-1,6-bisphosphate aldolase subunit GatY.